Consider the following 102-residue polypeptide: Carboxysome shell protein CsoS1C (102 aa).

The region spanning Ala-8–Ala-93 is the BMC domain.

The protein belongs to the bacterial microcompartments protein family. CsoS1 subfamily. In terms of assembly, homohexamer with a small central pore.

The protein localises to the carboxysome. One of shell proteins of the carboxysome, a polyhedral inclusion where RuBisCO (ribulose bisphosphate carboxylase, ccbL-ccbS) is sequestered. Assembles into hexamers which make sheets that form the facets of the polyhedral carboxysome. The shell probably limits the diffusion of CO(2) into and out of the carboxysome. This Hydrogenovibrio crunogenus (strain DSM 25203 / XCL-2) (Thiomicrospira crunogena) protein is Carboxysome shell protein CsoS1C.